Consider the following 679-residue polypeptide: Altered inheritance of mitochondria protein 21 (679 aa).

Residues 1–85 (MPSEVTPKVP…LQRPVRRSTT (85 aa)) are disordered. Basic and acidic residues predominate over residues 9-19 (VPERPSRRKTS). Position 18 is a phosphothreonine (Thr18). Residue Ser36 is modified to Phosphoserine. Thr58 carries the phosphothreonine modification. Ser70 carries the phosphoserine modification. Thr85 carries the post-translational modification Phosphothreonine. The residue at position 104 (Ser104) is a Phosphoserine. Positions 110 to 119 (NIHNVSRKKS) are enriched in basic residues. Disordered stretches follow at residues 110–522 (NIHN…EKIE), 549–580 (IDTT…PNKM), and 593–679 (EKLP…FHSL). 2 stretches are compositionally biased toward polar residues: residues 133 to 149 (QNGQ…TNPS) and 164 to 178 (SAIS…SNNE). Basic and acidic residues predominate over residues 179 to 213 (VTEHSDSEDLTEKQKVHAALDNEAGDRSHFEEKLI). Ser183, Ser206, and Ser231 each carry phosphoserine. The segment covering 243 to 272 (SDDKAEKFTKHPESSLEELQKHQEQQEEKI) has biased composition (basic and acidic residues). At Thr277 the chain carries Phosphothreonine. A Phosphoserine modification is found at Ser284. Residues 296–323 (EVNSQPQGPSDTETVIAATSSNVPSQIA) show a composition bias toward polar residues. Ser324 carries the phosphoserine modification. Composition is skewed to basic and acidic residues over residues 339–361 (KKDF…RVSE) and 372–383 (EESKIPKIPSER). The interval 383 to 396 (RPKRRAPPPVPKKP) is interaction with SH3 domain of ABP1. Composition is skewed to polar residues over residues 414–427 (DLHN…TTAS) and 437–452 (SSIT…TSKL). Residues 471-482 (LEKKLSSPDTES) show a composition bias toward basic and acidic residues. A compositionally biased stretch (basic residues) spans 501-512 (RRGRGPRGRKLP). Thr552 is modified (phosphothreonine). Over residues 556–576 (QAERALDEKSKSIPEEQREQS) the composition is skewed to basic and acidic residues. Ser576 carries the post-translational modification Phosphoserine. The span at 603 to 613 (PLSQLPQTNAV) shows a compositional bias: polar residues. A phosphoserine mark is found at Ser620, Ser623, Ser625, Ser627, Ser667, Ser671, Ser675, and Ser678. The segment covering 667 to 679 (SALHSEEASFHSL) has biased composition (basic and acidic residues).

The protein belongs to the AIM21 family. In terms of assembly, interacts with ribosomes. Interacts with ABP1.

Its subcellular location is the cytoplasm. It localises to the cytoskeleton. It is found in the actin patch. Its function is as follows. Involved in mitochondrial migration along actin filaments. This is Altered inheritance of mitochondria protein 21 (AIM21) from Saccharomyces cerevisiae (strain ATCC 204508 / S288c) (Baker's yeast).